We begin with the raw amino-acid sequence, 374 residues long: MQTSFDHLADRILAGGDATPADALAVLRADEKDLLHVVAAAGRLRRARFGNTVKVNYLVNLKSGLCPEDCHYCSQALGSRAPILKYNWLSSEEVLEQAGAGLRGGATRVCLVSSGRGPSDRDVDRVAAMAQELKGEQPGVEICACLGLLKDGQAERLRAAGVDAYNHNINTAESHHDTIVSTHSYSDRVDTIEKAAAAGLSPCSGLIAGLGETDEQLVEALFALKALGADSIPVNFLMPFDGTPSERTFELTPIRCVQILAMTRFVCPDTEIRIAGGREMHLRSLQALALHVANSIFLGDYLTSEGQDARADLEMLRDNGFAILGAEAKPAGTATAAHRAQTAHDIAGGTSVAGSAPDPAIRRRGAGTDVPANA.

The region spanning 51 to 278 is the Radical SAM core domain; the sequence is NTVKVNYLVN…DTEIRIAGGR (228 aa). Residues Cys66, Cys70, and Cys73 each coordinate [4Fe-4S] cluster. Residues Cys110, Cys143, Cys203, and Arg273 each coordinate [2Fe-2S] cluster. The disordered stretch occupies residues 346–374; sequence IAGGTSVAGSAPDPAIRRRGAGTDVPANA.

The protein belongs to the radical SAM superfamily. Biotin synthase family. In terms of assembly, homodimer. Requires [4Fe-4S] cluster as cofactor. It depends on [2Fe-2S] cluster as a cofactor.

It catalyses the reaction (4R,5S)-dethiobiotin + (sulfur carrier)-SH + 2 reduced [2Fe-2S]-[ferredoxin] + 2 S-adenosyl-L-methionine = (sulfur carrier)-H + biotin + 2 5'-deoxyadenosine + 2 L-methionine + 2 oxidized [2Fe-2S]-[ferredoxin]. It participates in cofactor biosynthesis; biotin biosynthesis; biotin from 7,8-diaminononanoate: step 2/2. Catalyzes the conversion of dethiobiotin (DTB) to biotin by the insertion of a sulfur atom into dethiobiotin via a radical-based mechanism. This chain is Biotin synthase, found in Nocardioides sp. (strain ATCC BAA-499 / JS614).